We begin with the raw amino-acid sequence, 276 residues long: Rhamnulose-1-phosphate aldolase (276 aa).

The active site involves E117. Zn(2+) is bound by residues H141, H143, and H212.

Belongs to the aldolase class II family. RhaD subfamily. In terms of assembly, homotetramer. It depends on Zn(2+) as a cofactor.

Its subcellular location is the cytoplasm. The enzyme catalyses L-rhamnulose 1-phosphate = (S)-lactaldehyde + dihydroxyacetone phosphate. It participates in carbohydrate degradation; L-rhamnose degradation; glycerone phosphate from L-rhamnose: step 3/3. Its function is as follows. Catalyzes the reversible cleavage of L-rhamnulose-1-phosphate to dihydroxyacetone phosphate (DHAP) and L-lactaldehyde. The sequence is that of Rhamnulose-1-phosphate aldolase from Enterobacter sp. (strain 638).